Reading from the N-terminus, the 208-residue chain is Small ribosomal subunit protein uS4 (208 aa).

The interval 29-48 (MERRPYGPGQHGRARRKQDS) is disordered. One can recognise an S4 RNA-binding domain in the interval 95–155 (QRLDALVLRA…ERSEKMVPFQ (61 aa)).

Belongs to the universal ribosomal protein uS4 family. In terms of assembly, part of the 30S ribosomal subunit. Contacts protein S5. The interaction surface between S4 and S5 is involved in control of translational fidelity.

In terms of biological role, one of the primary rRNA binding proteins, it binds directly to 16S rRNA where it nucleates assembly of the body of the 30S subunit. Its function is as follows. With S5 and S12 plays an important role in translational accuracy. The chain is Small ribosomal subunit protein uS4 from Micrococcus luteus (strain ATCC 4698 / DSM 20030 / JCM 1464 / CCM 169 / CCUG 5858 / IAM 1056 / NBRC 3333 / NCIMB 9278 / NCTC 2665 / VKM Ac-2230) (Micrococcus lysodeikticus).